The chain runs to 392 residues: Probable protein phosphatase 2C 22 (392 aa).

Positions M1–S26 are disordered. A PPM-type phosphatase domain is found at R89–L356. Mn(2+) contacts are provided by D133, G134, D304, and D347.

The protein belongs to the PP2C family. The cofactor is Mg(2+). It depends on Mn(2+) as a cofactor.

It catalyses the reaction O-phospho-L-seryl-[protein] + H2O = L-seryl-[protein] + phosphate. It carries out the reaction O-phospho-L-threonyl-[protein] + H2O = L-threonyl-[protein] + phosphate. The sequence is that of Probable protein phosphatase 2C 22 from Arabidopsis thaliana (Mouse-ear cress).